A 424-amino-acid chain; its full sequence is Endoglucanase (424 aa).

The first 19 residues, 1–19, serve as a signal peptide directing secretion; the sequence is MHRCMPLVAASMAALMLAG. Cys20 carries the N-palmitoyl cysteine lipid modification. Cys20 is lipidated: S-diacylglycerol cysteine. The propeptide occupies 20 to 43; it reads CGGGDGDTTLSTAAATDTTTLKTA. Catalysis depends on Glu247, which acts as the Proton donor. Residue Glu359 is the Nucleophile of the active site.

This sequence belongs to the glycosyl hydrolase 5 (cellulase A) family.

The protein localises to the cell membrane. It carries out the reaction Endohydrolysis of (1-&gt;4)-beta-D-glucosidic linkages in cellulose, lichenin and cereal beta-D-glucans.. In Ralstonia nicotianae (strain ATCC BAA-1114 / GMI1000) (Ralstonia solanacearum), this protein is Endoglucanase (egl).